Consider the following 270-residue polypeptide: MENIGRQRPIGVFDSGIGGLTNVRALMERLPMENIIYFGDTARVPYGTKSKATIENFSMQIVDFLLEHDVKAMVIACNTIAAVAGQKIRQKTGNMPVLDVISAGAKAALATTRNNKIGIIATNTTVNSNAYARAIHRNNPDTLVRTQAAPLLVPLVEEGWLEHEVTRLTVCEYLKPLLADGIDTLVLGCTHFPLLKPLIGREAGNVALVDSAITTAEETARVLAQEGLLNTDNNNPDYRFYVSDIPLKFRTIGERFLGRTMEQIEMVSLG.

Substrate is bound by residues 14–15 (DS) and 46–47 (YG). The active-site Proton donor/acceptor is Cys-77. 78–79 (NT) lines the substrate pocket. The Proton donor/acceptor role is filled by Cys-189. A substrate-binding site is contributed by 190–191 (TH).

This sequence belongs to the aspartate/glutamate racemases family.

It carries out the reaction L-glutamate = D-glutamate. Its pathway is cell wall biogenesis; peptidoglycan biosynthesis. In terms of biological role, provides the (R)-glutamate required for cell wall biosynthesis. The sequence is that of Glutamate racemase from Neisseria meningitidis serogroup A / serotype 4A (strain DSM 15465 / Z2491).